The chain runs to 312 residues: Olfactory receptor 5P4 (312 aa).

Residues 1–25 (METENDTMVTEFIILGLTDSATLRA) lie on the Extracellular side of the membrane. N5 carries an N-linked (GlcNAc...) asparagine glycan. A helical membrane pass occupies residues 26–46 (ILFVFFLPVYIVTVVGNISII). Over 47–54 (LLIRSSPQ) the chain is Cytoplasmic. Residues 55 to 75 (LHTPMYLFLSHLAFVDIGYST) form a helical membrane-spanning segment. The Extracellular portion of the chain corresponds to 76 to 99 (SVTPIMLISFLREETTIPLAGCAA). C97 and C189 are joined by a disulfide. The helical transmembrane segment at 100 to 120 (QLGSDVAFGTTECFLLATMAY) threads the bilayer. The Cytoplasmic segment spans residues 121-133 (DRYVAICSPLLYS). Residues 134 to 154 (TQMSPAICCFLLGASYLGGCM) traverse the membrane as a helical segment. Over 155 to 196 (NASSFTGCFVNLNFCGPNKVNHFFCDLFPLVKLSCGHAYIAE) the chain is Extracellular. A helical membrane pass occupies residues 197–217 (ISPSISSASVLVSTLSTIIVS). Residues 218–237 (YIYILHSILRMRSAEGRNKA) lie on the Cytoplasmic side of the membrane. The helical transmembrane segment at 238–258 (FSTCTSHLTAVTLFYGTVLFV) threads the bilayer. The Extracellular portion of the chain corresponds to 259–271 (YVMPKSSYSADQV). Residues 272–292 (KVASVVYTVVIPMLNPLIYSL) form a helical membrane-spanning segment. Topologically, residues 293 to 312 (RNKEVKEAMKKLMARTHWFP) are cytoplasmic.

The protein belongs to the G-protein coupled receptor 1 family.

The protein localises to the cell membrane. In terms of biological role, potential odorant receptor. This is Olfactory receptor 5P4 from Mus musculus (Mouse).